Reading from the N-terminus, the 132-residue chain is Insulin-like 3 (132 aa).

The first 21 residues, Met1–Leu21, serve as a signal peptide directing secretion. Gln27 bears the Pyrrolidone carboxylic acid mark. 3 disulfides stabilise this stretch: Cys34–Cys117, Cys46–Cys130, and Cys116–Cys121. The propeptide at Leu67–His104 is c peptide like.

Belongs to the insulin family. Heterodimer of a B chain and an A chain linked by two disulfide bonds. 20% of B chains include an extra N-terminal pentapeptide. In terms of tissue distribution, expressed exclusively in Leydig cells of the testis.

The protein resides in the secreted. Its function is as follows. Seems to play a role in testicular function. May be a trophic hormone with a role in testicular descent in fetal life. Is a ligand for LGR8 receptor. The chain is Insulin-like 3 (INSL3) from Bos taurus (Bovine).